A 437-amino-acid chain; its full sequence is Amino-acid acetyltransferase (437 aa).

Positions Glu-289 to Lys-429 constitute an N-acetyltransferase domain.

The protein belongs to the acetyltransferase family. ArgA subfamily.

Its subcellular location is the cytoplasm. It carries out the reaction L-glutamate + acetyl-CoA = N-acetyl-L-glutamate + CoA + H(+). The protein operates within amino-acid biosynthesis; L-arginine biosynthesis; N(2)-acetyl-L-ornithine from L-glutamate: step 1/4. The protein is Amino-acid acetyltransferase of Actinobacillus pleuropneumoniae serotype 5b (strain L20).